A 438-amino-acid chain; its full sequence is Thymidine phosphorylase (438 aa).

This sequence belongs to the thymidine/pyrimidine-nucleoside phosphorylase family. Homodimer.

The catalysed reaction is thymidine + phosphate = 2-deoxy-alpha-D-ribose 1-phosphate + thymine. Its pathway is pyrimidine metabolism; dTMP biosynthesis via salvage pathway; dTMP from thymine: step 1/2. The enzymes which catalyze the reversible phosphorolysis of pyrimidine nucleosides are involved in the degradation of these compounds and in their utilization as carbon and energy sources, or in the rescue of pyrimidine bases for nucleotide synthesis. The sequence is that of Thymidine phosphorylase from Agrobacterium fabrum (strain C58 / ATCC 33970) (Agrobacterium tumefaciens (strain C58)).